The following is a 90-amino-acid chain: Probable Fe(2+)-trafficking protein (90 aa).

It belongs to the Fe(2+)-trafficking protein family. Monomer.

Could be a mediator in iron transactions between iron acquisition and iron-requiring processes, such as synthesis and/or repair of Fe-S clusters in biosynthetic enzymes. This is Probable Fe(2+)-trafficking protein from Yersinia pestis bv. Antiqua (strain Antiqua).